A 546-amino-acid polypeptide reads, in one-letter code: MDKRAMLGAIGLAFGLMAWPFGASAKEKSMVWNEQWKTPSFVSGSLLKGEDAPEELVYRYLDQEKNTFQLGGQARERLSLIGKQTDELGHTVMRFEQRYRGIPVYGAVLVAHVNDGELSSLSGTLIPNLDKRTLKTEAAISIQQAEMIAKQDVADAVTKERPAAEEGKPTRLVIYPDGETPRLAYEVNVRFLTPVPGNWIYMIDAADGKVLNKWNQMDEAKPGGGQPVAGTSTVGVGRGVLGDQKYINTTYSSYYGYYYLQDNTRGSGIFTYDGRNRTVLPGSLWADVDNQFFASYDAAAVDAHYYAGVVYDYYKNVHGRLSYDGSNAAIRSTVHYGRGYNNAFWNGSQMVYGDGDGQTFLPFSGGIDVVGHELTHAVTDYTAGLVYQNESGAINEAMSDIFGTLVEFYANRNPDWEIGEDIYTPGIAGDALRSMSDPAKYGDPDHYSKRYTGTQDNGGVHTNSGIINKAAYLLSQGGVHYGVSVTGIGRDKMGKIFYRALVYYLTPTSNFSQLRAACVQAAADLYGSTSQEVNSVKQAFNAVGVY.

A signal peptide spans 1 to 25; it reads MDKRAMLGAIGLAFGLMAWPFGASA. Residues 26-228 constitute a propeptide, activation peptide; it reads KEKSMVWNEQ…EAKPGGGQPV (203 aa). Ca(2+) is bound by residues Asp-287, Asp-289, Gln-291, and Asp-368. Residue His-372 coordinates Zn(2+). The active site involves Glu-373. 2 residues coordinate Zn(2+): His-376 and Glu-396. Asn-413, Asp-415, Glu-417, Glu-420, Tyr-423, Thr-424, Ile-427, and Asp-430 together coordinate Ca(2+). His-461 serves as the catalytic Proton donor.

Belongs to the peptidase M4 family. The cofactor is Ca(2+). It depends on Zn(2+) as a cofactor.

It localises to the secreted. The catalysed reaction is Preferential cleavage: Xaa-|-Leu &gt; Xaa-|-Phe.. In terms of biological role, extracellular zinc metalloprotease. Has collagenase activity. The protein is Thermolysin (npr) of Bacillus sp. (strain EA1).